Consider the following 484-residue polypeptide: Legumin type B (484 aa).

The first 22 residues, 1 to 22 (MSKPFLSLLSLSLLLFTSTCLA), serve as a signal peptide directing secretion. Intrachain disulfides connect cysteine 33–cysteine 66 and cysteine 109–cysteine 310. Positions 38-257 (INALEPDHRV…TFNTEEDTAK (220 aa)) constitute a Cupin type-1 1 domain. 3 disordered regions span residues 109 to 141 (CPQT…RFRK), 196 to 236 (PETQ…GNSV), and 275 to 304 (GLRI…GRNG). The segment covering 117 to 129 (RSSQSRQGSRQQQ) has biased composition (low complexity). Residues 284 to 293 (QQEEEEEEEE) are compositionally biased toward acidic residues. In terms of domain architecture, Cupin type-1 2 spans 316–463 (ENIAQPARAD…AFGLRQRQVT (148 aa)).

This sequence belongs to the 11S seed storage protein (globulins) family. Hexamer; each subunit is composed of an acidic and a basic chain derived from a single precursor and linked by a disulfide bond.

This protein found in the seeds of many leguminous and non-leguminous plants is the source of sulfur-containing amino acids in seed meals. The protein is Legumin type B (LEB4) of Vicia faba (Broad bean).